A 132-amino-acid polypeptide reads, in one-letter code: Translation initiation factor 5A (132 aa).

A Hypusine modification is found at K37.

It belongs to the eIF-5A family.

Its subcellular location is the cytoplasm. Functions by promoting the formation of the first peptide bond. The sequence is that of Translation initiation factor 5A (eif5a) from Methanocaldococcus jannaschii (strain ATCC 43067 / DSM 2661 / JAL-1 / JCM 10045 / NBRC 100440) (Methanococcus jannaschii).